The primary structure comprises 422 residues: Fasciclin-like arabinogalactan protein 10 (422 aa).

Residues 1–25 (MATSRAFTLFAFTLSLLTVASTVSG) form the signal peptide. FAS1 domains lie at 26 to 172 (HNIT…NAPI) and 187 to 327 (GVSN…DNVL). N-linked (GlcNAc...) asparagine glycans are attached at residues asparagine 27, asparagine 128, asparagine 162, asparagine 190, and asparagine 244. Positions 336-397 (SSSPAPAPEP…PTSSENSNAK (62 aa)) are disordered. Positions 340 to 374 (APAPEPVSAPTPTPAKSPSPVEAPSPTAASPPAPP) are enriched in pro residues. The segment covering 386–397 (DSPTSSENSNAK) has biased composition (polar residues). A lipid anchor (GPI-anchor amidated asparagine) is attached at asparagine 398. A propeptide spans 399-422 (AAFHVNAPALFTALVTIAATSLLL) (removed in mature form).

It belongs to the fasciclin-like AGP family.

Its subcellular location is the cell membrane. Its function is as follows. May be a cell surface adhesion protein. The polypeptide is Fasciclin-like arabinogalactan protein 10 (FLA10) (Arabidopsis thaliana (Mouse-ear cress)).